Here is a 489-residue protein sequence, read N- to C-terminus: Leukocyte immunoglobulin-like receptor subfamily A member 1 (489 aa).

An N-terminal signal peptide occupies residues 1–16 (MTPIVTVLICLRLSLG). Residues 17–461 (PRTHVQAGTL…SHPQDYTVEN (445 aa)) are Extracellular-facing. 4 consecutive Ig-like C2-type domains span residues 27-116 (PKPT…PLEL), 119-224 (TGAY…GVSK), 226-315 (PSLS…DPLD), and 326-415 (PFIS…SDSL). A disulfide bridge connects residues Cys49 and Cys98. N-linked (GlcNAc...) asparagine glycosylation is present at Asn140. 3 disulfides stabilise this stretch: Cys145–Cys197, Cys157–Cys167, and Cys246–Cys297. N-linked (GlcNAc...) asparagine glycosylation is found at Asn281, Asn302, and Asn341. A disulfide bridge connects residues Cys346 and Cys397. Residues 425–453 (TLSPPQNKSDSKAGAANTLSPSQNKTASH) are disordered. 2 N-linked (GlcNAc...) asparagine glycosylation sites follow: Asn431 and Asn448. Positions 441–453 (NTLSPSQNKTASH) are enriched in polar residues. A helical membrane pass occupies residues 462 to 482 (LIRMGIAGLVLVVLGILLFEA). The Cytoplasmic portion of the chain corresponds to 483 to 489 (QHSQRSL).

In terms of tissue distribution, detected in monocytes and B-cells.

The protein localises to the membrane. In terms of biological role, may act as receptor for class I MHC antigens. The protein is Leukocyte immunoglobulin-like receptor subfamily A member 1 (LILRA1) of Homo sapiens (Human).